The chain runs to 54 residues: Large ribosomal subunit protein bL33 (54 aa).

It belongs to the bacterial ribosomal protein bL33 family.

The chain is Large ribosomal subunit protein bL33 from Roseiflexus castenholzii (strain DSM 13941 / HLO8).